The chain runs to 518 residues: Fusicoccin H C-9 hydroxylase (518 aa).

The chain crosses the membrane as a helical span at residues 12–29 (HLLLISTVIAVLAALIVS). 2 N-linked (GlcNAc...) asparagine glycosylation sites follow: asparagine 81 and asparagine 168. Position 456 (cysteine 456) interacts with heme.

This sequence belongs to the cytochrome P450 family. It depends on heme as a cofactor.

It localises to the membrane. It participates in mycotoxin biosynthesis. Cytochrome P450 monooxygenase; part of the 2 gene clusters that mediate the biosynthesis of fusicoccins, diterpene glucosides that display phytohormone-like activity and function as potent activators of plasma membrane H(+)-ATPases in plants by modifying 14-3-3 proteins and cause the plant disease constriction canker. The first step in the pathway is performed by the fusicoccadiene synthase PaFS that possesses both prenyl transferase and terpene cyclase activity, converting isopentenyl diphosphate and dimethylallyl diphosphate into geranylgeranyl diphosphate (GGDP) and successively converting GGDP into fusicocca-2,10(14)-diene, a precursor for fusicoccin H. The second step is the oxidation at the C-8 position by the cytochrome P450 monooxygenase PaP450-2 to yield fusicocca-2,10(14)-diene-8-beta-ol. The cytochrome P450 monooxygenase PaP450-1 then catalyzes the hydroxylation at the C-16 position to produce fusicocca-2,10(14)-diene-8-beta,16-diol. The dioxygenase fc-dox then catalyzes the 16-oxydation of fusicocca-2,10(14)-diene-8-beta,16-diol to yield an aldehyde (8-beta-hydroxyfusicocca-1,10(14)-dien-16-al). The short-chain dehydrogenase/reductase fc-sdr catalyzes the reduction of the aldehyde to yield fusicocca-1,10(14)-diene-8-beta,16-diol. The next step is the hydroxylation at C-9 performed by the cytochrome P450 monooxygenase PaP450-3 that leads to fusicoccin H aglycon which is glycosylated to fusicoccin H by the O-glycosyltransferase PaGT. Hydroxylation at C-12 by the cytochrome P450 monooxygenase PaP450-4 leads then to the production of fusicoccin Q and is followed by methylation by the O-methyltransferase PaMT to yield fusicoccin P. Fusicoccin P is further converted to fusicoccin J via prenylation by the O-glucose prenyltransferase PaPT. Cytochrome P450 monooxygenase PaP450-5 then performs hydroxylation at C-19 to yield dideacetyl-fusicoccin A which is acetylated to 3'-O-deacetyl-fusicoccin A by the O-acetyltransferase PaAT-2. Finally, a another acetylation by the O-acetyltransferase PaAT-1 yields fusicoccin A. This chain is Fusicoccin H C-9 hydroxylase, found in Phomopsis amygdali (Fusicoccum amygdali).